A 257-amino-acid chain; its full sequence is Ribonuclease HII (257 aa).

One can recognise an RNase H type-2 domain in the interval 72 to 257 (TYIAGIDEVG…FAPIKDMIQK (186 aa)). 3 residues coordinate a divalent metal cation: D78, E79, and D170.

The protein belongs to the RNase HII family. Requires Mn(2+) as cofactor. Mg(2+) is required as a cofactor.

The protein resides in the cytoplasm. The catalysed reaction is Endonucleolytic cleavage to 5'-phosphomonoester.. Its function is as follows. Endonuclease that specifically degrades the RNA of RNA-DNA hybrids. The protein is Ribonuclease HII of Bacillus cereus (strain AH820).